The following is a 198-amino-acid chain: Putative manganese efflux pump MntP (198 aa).

6 helical membrane-spanning segments follow: residues S3 to C23, V37 to L57, I65 to I85, S105 to L127, I131 to G153, and I171 to F191.

It belongs to the MntP (TC 9.B.29) family.

It is found in the cell membrane. Its function is as follows. Probably functions as a manganese efflux pump. This Acetivibrio thermocellus (strain ATCC 27405 / DSM 1237 / JCM 9322 / NBRC 103400 / NCIMB 10682 / NRRL B-4536 / VPI 7372) (Clostridium thermocellum) protein is Putative manganese efflux pump MntP.